The primary structure comprises 367 residues: Glutamate 5-kinase (367 aa).

Position 10 (K10) interacts with ATP. Substrate is bound by residues S50, D137, and N149. Residues 169-170 and 211-217 contribute to the ATP site; these read TD and TGGMATK. In terms of domain architecture, PUA spans 275-353; sequence AGEITVDDGA…QQISEILGYE (79 aa).

The protein belongs to the glutamate 5-kinase family.

The protein localises to the cytoplasm. It carries out the reaction L-glutamate + ATP = L-glutamyl 5-phosphate + ADP. It participates in amino-acid biosynthesis; L-proline biosynthesis; L-glutamate 5-semialdehyde from L-glutamate: step 1/2. Catalyzes the transfer of a phosphate group to glutamate to form L-glutamate 5-phosphate. In Yersinia pseudotuberculosis serotype IB (strain PB1/+), this protein is Glutamate 5-kinase.